We begin with the raw amino-acid sequence, 461 residues long: Cysteine--tRNA ligase (461 aa).

Position 30 (cysteine 30) interacts with Zn(2+). The short motif at 32–42 is the 'HIGH' region element; that stretch reads VTVYDLCHIGH. 3 residues coordinate Zn(2+): cysteine 211, histidine 236, and glutamate 240. The 'KMSKS' region motif lies at 268–272; it reads KMSKS. Lysine 271 is an ATP binding site.

It belongs to the class-I aminoacyl-tRNA synthetase family. Monomer. Requires Zn(2+) as cofactor.

It localises to the cytoplasm. It catalyses the reaction tRNA(Cys) + L-cysteine + ATP = L-cysteinyl-tRNA(Cys) + AMP + diphosphate. The sequence is that of Cysteine--tRNA ligase from Shewanella sp. (strain ANA-3).